The following is a 222-amino-acid chain: Leucyl/phenylalanyl-tRNA--protein transferase (222 aa).

This sequence belongs to the L/F-transferase family.

It is found in the cytoplasm. It carries out the reaction N-terminal L-lysyl-[protein] + L-leucyl-tRNA(Leu) = N-terminal L-leucyl-L-lysyl-[protein] + tRNA(Leu) + H(+). The catalysed reaction is N-terminal L-arginyl-[protein] + L-leucyl-tRNA(Leu) = N-terminal L-leucyl-L-arginyl-[protein] + tRNA(Leu) + H(+). The enzyme catalyses L-phenylalanyl-tRNA(Phe) + an N-terminal L-alpha-aminoacyl-[protein] = an N-terminal L-phenylalanyl-L-alpha-aminoacyl-[protein] + tRNA(Phe). Its function is as follows. Functions in the N-end rule pathway of protein degradation where it conjugates Leu, Phe and, less efficiently, Met from aminoacyl-tRNAs to the N-termini of proteins containing an N-terminal arginine or lysine. The sequence is that of Leucyl/phenylalanyl-tRNA--protein transferase from Legionella pneumophila (strain Corby).